A 230-amino-acid polypeptide reads, in one-letter code: Intracellular hyphae protein 1 (230 aa).

Positions 1-18 (MQTSFVALLAVAASLASA) are cleaved as a signal peptide. The tract at residues 20 to 102 (PHGGNSYEAS…KNNTLPVPTC (83 aa)) is disordered. 10 repeat units span residues 30-33 (LPEP), 36-39 (LPEP), 42-45 (LPEP), 46-49 (VEGP), 50-53 (YKPK), 57-60 (LPEP), 65-68 (YKPK), 76-79 (VEGP), 80-83 (YKPK), and 84-87 (LPEP). Residues 30 to 87 (LPEPTNLPEPTKLPEPVEGPYKPKPPILPEPIKDNYKPKTPILPEHVEGPYKPKLPEP) are 5 X 4 AA repeats of L-P-E-P. The interval 46–87 (VEGPYKPKPPILPEPIKDNYKPKTPILPEHVEGPYKPKLPEP) is 2 X 4 AA repeats of V-E-G-P. The segment at 50 to 83 (YKPKPPILPEPIKDNYKPKTPILPEHVEGPYKPK) is 3 X 4 AA repeats of Y-K-P-K. Residues 74 to 84 (EHVEGPYKPKL) are compositionally biased toward basic and acidic residues. Residue Asn-94 is glycosylated (N-linked (GlcNAc...) asparagine). Positions 108–152 (KTHKVKSGESLTTIAEKYDTGICNIAKLNNLADPNFVDLNQDLQI) constitute a LysM 1 domain. Asn-161 is a glycosylation site (N-linked (GlcNAc...) asparagine). The LysM 2 domain occupies 183–227 (DIYSVVSGDTLTSIAQALQITLQSLKDANPGVVPEHLNVGQKLNV).

Forms a multimeric structure. N-glycosylated and may be O-glycosylated. Expressed in penetration hyphae, infection vesicles and primary hyphae (intracellular hyphae).

It localises to the secreted. The protein resides in the cell wall. Functionally, may have roles in host-pathogen interaction, including establishment and maintenance of biotrophy, prevention of host recognition of the fungus and a barrier to host defense molecules. This chain is Intracellular hyphae protein 1 (CIH1), found in Colletotrichum lindemuthianum (Bean anthracnose fungus).